The chain runs to 356 residues: Protein RecA (356 aa).

67–74 (GPESSGKT) is a binding site for ATP.

It belongs to the RecA family.

Its subcellular location is the cytoplasm. Functionally, can catalyze the hydrolysis of ATP in the presence of single-stranded DNA, the ATP-dependent uptake of single-stranded DNA by duplex DNA, and the ATP-dependent hybridization of homologous single-stranded DNAs. It interacts with LexA causing its activation and leading to its autocatalytic cleavage. The sequence is that of Protein RecA from Yersinia pseudotuberculosis serotype I (strain IP32953).